The chain runs to 166 residues: MSKRIAVYPGSFDPITNGHLDIILRGLNIFDELIVAVAHNVAKTGLFSIDERLDLIRETVKDYPQVRVDTFKGLLVDYLTRQNARIVLRGLRAVSDFENEFQLAQMNHTMNTQLETLFMMTSVSYGYLSSSIVKEVAAWGGDIDDFVPPCVKDALKTKFPDAPRID.

Residue Ser-11 coordinates substrate. Residues 11–12 (SF) and His-19 contribute to the ATP site. The substrate site is built by Lys-43, Leu-75, and Arg-89. Residues 90 to 92 (GLR), Glu-100, and 125 to 131 (YGYLSSS) each bind ATP.

The protein belongs to the bacterial CoaD family. Homohexamer. Mg(2+) is required as a cofactor.

Its subcellular location is the cytoplasm. The catalysed reaction is (R)-4'-phosphopantetheine + ATP + H(+) = 3'-dephospho-CoA + diphosphate. The protein operates within cofactor biosynthesis; coenzyme A biosynthesis; CoA from (R)-pantothenate: step 4/5. Functionally, reversibly transfers an adenylyl group from ATP to 4'-phosphopantetheine, yielding dephospho-CoA (dPCoA) and pyrophosphate. This is Phosphopantetheine adenylyltransferase from Syntrophotalea carbinolica (strain DSM 2380 / NBRC 103641 / GraBd1) (Pelobacter carbinolicus).